Consider the following 247-residue polypeptide: uncharacterized protein (247 aa).

To M.pneumoniae MPN_635 N-terminal region.

This is an uncharacterized protein from Mycoplasma pneumoniae (strain ATCC 29342 / M129 / Subtype 1) (Mycoplasmoides pneumoniae).